Consider the following 222-residue polypeptide: uncharacterized protein (222 aa).

A run of 4 helical transmembrane segments spans residues 25–45 (LLWL…PATA), 80–100 (LLGA…ALIY), 111–131 (FAIM…FPLL), and 160–180 (LALT…VPFF).

Its subcellular location is the cell membrane. This is an uncharacterized protein from Bacillus subtilis (strain 168).